A 340-amino-acid chain; its full sequence is DNA-directed RNA polymerase subunit alpha (340 aa).

The tract at residues 1–235 (MYRNWTELIK…DQLNPFINFD (235 aa)) is alpha N-terminal domain (alpha-NTD). The tract at residues 251 to 340 (WNPNLFRKVD…LSKQFEEENF (90 aa)) is alpha C-terminal domain (alpha-CTD).

Belongs to the RNA polymerase alpha chain family. Homodimer. The RNAP catalytic core consists of 2 alpha, 1 beta, 1 beta' and 1 omega subunit. When a sigma factor is associated with the core the holoenzyme is formed, which can initiate transcription.

The enzyme catalyses RNA(n) + a ribonucleoside 5'-triphosphate = RNA(n+1) + diphosphate. Functionally, DNA-dependent RNA polymerase catalyzes the transcription of DNA into RNA using the four ribonucleoside triphosphates as substrates. The chain is DNA-directed RNA polymerase subunit alpha from Magnetococcus marinus (strain ATCC BAA-1437 / JCM 17883 / MC-1).